The primary structure comprises 380 residues: Tomoregulin-1 (380 aa).

The signal sequence occupies residues 1–39; the sequence is MGAAAAEAPLRLPAAPPLAFCCYTSVLLLFAFSLPGSRA. At 40 to 330 the chain is on the extracellular side; that stretch reads SNQPPGGGGG…VPSRQKLTHV (291 aa). Kazal-like domains are found at residues 98-145 and 189-237; these read ACQF…PCYS and VCNI…HCTD. 9 disulfides stabilise this stretch: Cys99-Cys129, Cys103-Cys122, Cys111-Cys143, Cys190-Cys221, Cys194-Cys214, Cys203-Cys235, Cys275-Cys288, Cys283-Cys299, and Cys301-Cys310. Residues 271–311 enclose the EGF-like domain; it reads NHMPCPENLNGYCIHGKCEFIYSTQKASCRCESGYTGQHCE. A helical transmembrane segment spans residues 331-351; sequence LIAAIIGAVQIAIIVAIVMCI. Topologically, residues 352 to 380 are cytoplasmic; that stretch reads TRKCPKNNRGRRQKQNLGHFTSDTSSRMV. Positions 359–380 are disordered; the sequence is NRGRRQKQNLGHFTSDTSSRMV. The span at 366–380 shows a compositional bias: polar residues; sequence QNLGHFTSDTSSRMV.

This sequence belongs to the tomoregulin family. In terms of assembly, may interact with ST14. Expressed predominantly in brain, and at lower levels in heart, placenta and skeletal muscle. Down-regulated in brain tumors as compared to control brain tissues.

It localises to the cell membrane. In terms of biological role, neuron-specific restriction factor that prevents herpes simplex virus 1 (HHV-1) infection in the brain by blocking viral entry. Also able to restrict herpes simplex virus 2 (HHV-2) infection, although to a lesser extent. Acts by preventing the association between the viral glycoprotein D (gD) and its cell surface receptor NECTIN1, thereby inhibiting fusion of the virus and the cell membrane. Also able to prevent the association between the viral glycoprotein B (gB) and MYH9/NMMHC-IIA and MYH10/NMMHC-IIB receptors. May be a tumor suppressor in brain cancers. This Homo sapiens (Human) protein is Tomoregulin-1.